The sequence spans 29 residues: Cycloviolacin-O16 (29 aa).

Positions 1–29 (GLPCGETCFTGKCYTPGCSCSYPICKKIN) form a cross-link, cyclopeptide (Gly-Asn). 3 disulfide bridges follow: cysteine 4/cysteine 18, cysteine 8/cysteine 20, and cysteine 13/cysteine 25.

This is a cyclic peptide.

Its function is as follows. Probably participates in a plant defense mechanism. The sequence is that of Cycloviolacin-O16 from Viola odorata (Sweet violet).